A 184-amino-acid polypeptide reads, in one-letter code: ATP synthase subunit b, chloroplastic (184 aa).

Residues 27–49 traverse the membrane as a helical segment; sequence LATNPINLSVVFGVLIFFGKGVL.

This sequence belongs to the ATPase B chain family. As to quaternary structure, F-type ATPases have 2 components, F(1) - the catalytic core - and F(0) - the membrane proton channel. F(1) has five subunits: alpha(3), beta(3), gamma(1), delta(1), epsilon(1). F(0) has four main subunits: a(1), b(1), b'(1) and c(10-14). The alpha and beta chains form an alternating ring which encloses part of the gamma chain. F(1) is attached to F(0) by a central stalk formed by the gamma and epsilon chains, while a peripheral stalk is formed by the delta, b and b' chains.

It is found in the plastid. The protein localises to the chloroplast thylakoid membrane. In terms of biological role, f(1)F(0) ATP synthase produces ATP from ADP in the presence of a proton or sodium gradient. F-type ATPases consist of two structural domains, F(1) containing the extramembraneous catalytic core and F(0) containing the membrane proton channel, linked together by a central stalk and a peripheral stalk. During catalysis, ATP synthesis in the catalytic domain of F(1) is coupled via a rotary mechanism of the central stalk subunits to proton translocation. Component of the F(0) channel, it forms part of the peripheral stalk, linking F(1) to F(0). This Nasturtium officinale (Watercress) protein is ATP synthase subunit b, chloroplastic.